The sequence spans 800 residues: Phenylalanine--tRNA ligase beta subunit (800 aa).

Residues 39 to 148 form the tRNA-binding domain; it reads TAALAPFVVG…ADTPVGVPLV (110 aa). The B5 domain occupies 402 to 478; it reads VWRRTIALRP…RLHGFDLVPA (77 aa). Residues Asp-456, Asp-462, Glu-465, and Glu-466 each coordinate Mg(2+). The region spanning 706 to 799 is the FDX-ACB domain; it reads SPFQPVARDF…VTKLTGGSLR (94 aa).

Belongs to the phenylalanyl-tRNA synthetase beta subunit family. Type 1 subfamily. In terms of assembly, tetramer of two alpha and two beta subunits. Requires Mg(2+) as cofactor.

The protein localises to the cytoplasm. The catalysed reaction is tRNA(Phe) + L-phenylalanine + ATP = L-phenylalanyl-tRNA(Phe) + AMP + diphosphate + H(+). The chain is Phenylalanine--tRNA ligase beta subunit from Rhodospirillum rubrum (strain ATCC 11170 / ATH 1.1.1 / DSM 467 / LMG 4362 / NCIMB 8255 / S1).